Reading from the N-terminus, the 242-residue chain is Urease accessory protein UreF (242 aa).

This sequence belongs to the UreF family. UreD, UreF and UreG form a complex that acts as a GTP-hydrolysis-dependent molecular chaperone, activating the urease apoprotein by helping to assemble the nickel containing metallocenter of UreC. The UreE protein probably delivers the nickel.

It is found in the cytoplasm. Its function is as follows. Required for maturation of urease via the functional incorporation of the urease nickel metallocenter. The polypeptide is Urease accessory protein UreF (Bradyrhizobium diazoefficiens (strain JCM 10833 / BCRC 13528 / IAM 13628 / NBRC 14792 / USDA 110)).